The sequence spans 693 residues: Golgin subfamily A member 6C (693 aa).

Disordered stretches follow at residues 20-71, 497-547, and 629-693; these read NKLA…DSQY, LPGE…GTEQ, and NPAD…MQDT. Positions 73–611 form a coiled coil; sequence ELAVALESSS…KLLELQELVL (539 aa). A compositionally biased stretch (basic and acidic residues) spans 537–547; that stretch reads LPKEKADGTEQ. The segment covering 679–693 has biased composition (polar residues); sequence PVQQIVQLSPVMQDT.

This sequence belongs to the GOLGA6 family.

This chain is Golgin subfamily A member 6C (GOLGA6C), found in Homo sapiens (Human).